A 378-amino-acid polypeptide reads, in one-letter code: Serpin B6 (378 aa).

N-acetylmethionine is present on M1. K196 carries the post-translational modification N6-acetyllysine.

The protein belongs to the serpin family. Ov-serpin subfamily. In terms of assembly, forms a complex with the monomeric form of beta-tryptase. Brain.

Its subcellular location is the cytoplasm. In terms of biological role, inhibitor of cathepsin G, kallikrein-8 and thrombin. May play an important role in the inner ear in the protection against leakage of lysosomal content during stress. May be involved in the regulation of serine proteinases present in the brain or extravasated from the blood. This is Serpin B6 (SERPINB6) from Bos taurus (Bovine).